The following is a 222-amino-acid chain: Glutathione S-transferase A4 (222 aa).

The residue at position 1 (Met-1) is an N-acetylmethionine. The GST N-terminal domain occupies Thr-3–Gly-83. Glutathione contacts are provided by residues Tyr-9, Gln-54–Val-55, and Gln-67–Thr-68. Residues Asp-85–Pro-208 enclose the GST C-terminal domain.

The protein belongs to the GST superfamily. Alpha family. Homodimer.

Its subcellular location is the cytoplasm. The enzyme catalyses RX + glutathione = an S-substituted glutathione + a halide anion + H(+). Its function is as follows. Conjugation of reduced glutathione to a wide number of exogenous and endogenous hydrophobic electrophiles. This Bos taurus (Bovine) protein is Glutathione S-transferase A4 (GSTA4).